Reading from the N-terminus, the 178-residue chain is uncharacterized protein (178 aa).

Residues 7 to 27 traverse the membrane as a helical segment; sequence LAIGTAILLIGMAYWTVSIVE.

The protein localises to the membrane. This is an uncharacterized protein from Methanocaldococcus jannaschii (strain ATCC 43067 / DSM 2661 / JAL-1 / JCM 10045 / NBRC 100440) (Methanococcus jannaschii).